The following is a 296-amino-acid chain: Bifunctional protein FolD 1 (296 aa).

NADP(+)-binding positions include 167 to 169 (GCG) and Ile-235.

Belongs to the tetrahydrofolate dehydrogenase/cyclohydrolase family. Homodimer.

It carries out the reaction (6R)-5,10-methylene-5,6,7,8-tetrahydrofolate + NADP(+) = (6R)-5,10-methenyltetrahydrofolate + NADPH. The catalysed reaction is (6R)-5,10-methenyltetrahydrofolate + H2O = (6R)-10-formyltetrahydrofolate + H(+). Its pathway is one-carbon metabolism; tetrahydrofolate interconversion. Its function is as follows. Catalyzes the oxidation of 5,10-methylenetetrahydrofolate to 5,10-methenyltetrahydrofolate and then the hydrolysis of 5,10-methenyltetrahydrofolate to 10-formyltetrahydrofolate. The polypeptide is Bifunctional protein FolD 1 (Nocardioides sp. (strain ATCC BAA-499 / JS614)).